Here is a 491-residue protein sequence, read N- to C-terminus: Ketol-acid reductoisomerase (NADP(+)) (491 aa).

The KARI N-terminal Rossmann domain occupies 15 to 208; it reads AQLGKCRFMG…GGHRAGVLES (194 aa). Residues 45–48, Arg68, Arg76, Ser78, and 108–110 contribute to the NADP(+) site; these read CGAQ and DKQ. The active site involves His132. An NADP(+)-binding site is contributed by Gly158. 2 consecutive KARI C-terminal knotted domains span residues 209–344 and 345–484; these read SFVA…TAPQ and YEGK…MTDM. Residues Asp217, Glu221, Glu389, and Glu393 each coordinate Mg(2+). A substrate-binding site is contributed by Ser414.

The protein belongs to the ketol-acid reductoisomerase family. It depends on Mg(2+) as a cofactor.

It carries out the reaction (2R)-2,3-dihydroxy-3-methylbutanoate + NADP(+) = (2S)-2-acetolactate + NADPH + H(+). The enzyme catalyses (2R,3R)-2,3-dihydroxy-3-methylpentanoate + NADP(+) = (S)-2-ethyl-2-hydroxy-3-oxobutanoate + NADPH + H(+). It functions in the pathway amino-acid biosynthesis; L-isoleucine biosynthesis; L-isoleucine from 2-oxobutanoate: step 2/4. The protein operates within amino-acid biosynthesis; L-valine biosynthesis; L-valine from pyruvate: step 2/4. Involved in the biosynthesis of branched-chain amino acids (BCAA). Catalyzes an alkyl-migration followed by a ketol-acid reduction of (S)-2-acetolactate (S2AL) to yield (R)-2,3-dihydroxy-isovalerate. In the isomerase reaction, S2AL is rearranged via a Mg-dependent methyl migration to produce 3-hydroxy-3-methyl-2-ketobutyrate (HMKB). In the reductase reaction, this 2-ketoacid undergoes a metal-dependent reduction by NADPH to yield (R)-2,3-dihydroxy-isovalerate. This Shigella flexneri protein is Ketol-acid reductoisomerase (NADP(+)).